The primary structure comprises 497 residues: MKFSELGLSDSLLKAIKRSGYEEATPIQEQTIPMVLEGKDVIGQAQTGTGKTAAFGLPIIENVDTENPNIQAIIISPTRELAIQTQEELYRLGKDKHVRVQVVYGGADIRRQIKSLKQHPQILVGTPGRLRDHINRHTVKLDHIKTLVLDEADEMLNMGFLEDIESIIKETPDDRQTLLFSATMPPEIKRIGVQFMSDPETVRIKAKELTTDLVDQYYVRARDYEKFDIMTRLIDVQDPDLTIVFGRTKRRVDELSKGLIARGYNAAGIHGDLTQDKRSKIMWKFKNNELDILVATDVAARGLDISGVTHVYNYDIPSDPDSYVHRIGRTGRAGHHGVSLTFVTPNEMDYLHEIEKLTRVRMLPLKPPTAEEAFKGQVASAFNDIDELIAQDSTDRYEEAAEKLLETHNATDLVAALLNNMTKEAASEVPVKITPERPLPRRNKRNNRNGNRNNSHGGNHYRRKNFRRHQHGSHRNDNHGKSHSSRHSFNIRHRKEN.

The Q motif motif lies at 1-29 (MKFSELGLSDSLLKAIKRSGYEEATPIQE). The region spanning 32-202 (IPMVLEGKDV…VQFMSDPETV (171 aa)) is the Helicase ATP-binding domain. Position 45–52 (45–52 (AQTGTGKT)) interacts with ATP. The short motif at 150–153 (DEAD) is the DEAD box element. The 146-residue stretch at 228 to 373 (DIMTRLIDVQ…PLKPPTAEEA (146 aa)) folds into the Helicase C-terminal domain. Positions 425–497 (AASEVPVKIT…SFNIRHRKEN (73 aa)) are disordered. Positions 448 to 458 (RNGNRNNSHGG) are enriched in low complexity. 2 stretches are compositionally biased toward basic residues: residues 459–473 (NHYR…QHGS) and 481–497 (KSHS…RKEN).

The protein belongs to the DEAD box helicase family. CshA subfamily. In terms of assembly, oligomerizes, may be a member of the RNA degradosome.

It localises to the cytoplasm. Its subcellular location is the cell membrane. The catalysed reaction is ATP + H2O = ADP + phosphate + H(+). In terms of biological role, DEAD-box RNA helicase possibly involved in RNA degradation. Unwinds dsRNA in both 5'- and 3'-directions, has RNA-dependent ATPase activity. Over-expression leads to cell aggregation. The sequence is that of ATP-dependent RNA helicase CshA from Limosilactobacillus reuteri (Lactobacillus reuteri).